The chain runs to 362 residues: Serpentine receptor class epsilon-37 (362 aa).

7 helical membrane-spanning segments follow: residues 29–49 (IFYV…YILV), 67–87 (IMMC…IVLI), 127–147 (IYFA…AVLA), 170–190 (IPIL…YQTT), 204–224 (IFIG…NLAW), 260–280 (LVVS…VLLF), and 288–308 (FFVH…SLTL).

This sequence belongs to the nematode receptor-like protein sre family.

The protein resides in the membrane. The protein is Serpentine receptor class epsilon-37 (sre-37) of Caenorhabditis elegans.